The chain runs to 254 residues: Metallo-beta-lactamase type 2 (254 aa).

An N-terminal signal peptide occupies residues 1–27; the sequence is MMKGWMKCGLAGAVVLMASFWGGSVRA. Asp-99 contacts Zn(2+). Residues Thr-135 and His-174 each coordinate substrate. Cys-193 contributes to the Zn(2+) binding site. Substrate is bound by residues Lys-196 and Asn-201. His-231 contributes to the Zn(2+) binding site.

It belongs to the metallo-beta-lactamase superfamily. Class-B beta-lactamase family. As to quaternary structure, monomer. The cofactor is Zn(2+).

It localises to the periplasm. The enzyme catalyses a beta-lactam + H2O = a substituted beta-amino acid. Its activity is regulated as follows. Competitively inhibited by mercaptophosphonate and pyridine carboxylate derivatives. Also inhibited by the binding of a second zinc ion and by chelating agents such as EDTA. In terms of biological role, confers resistance to the different beta-lactams antibiotics (penicillin, cephalosporin and carbapenem) via the hydrolysis of the beta-lactam ring. It is able to hydrolyze penicillin and imipenem, but is much less active against cephalothin, cefotaxime, meropenem and ceftazidime. The sequence is that of Metallo-beta-lactamase type 2 from Aeromonas hydrophila.